Consider the following 249-residue polypeptide: ATP-dependent Clp protease proteolytic subunit (249 aa).

The Nucleophile role is filled by serine 107. Histidine 132 is a catalytic residue. The disordered stretch occupies residues 212 to 249 (ESASQDNSLDPDAPDESASQDNSLDPDAPDETRPPKLR).

This sequence belongs to the peptidase S14 family. Component of the chloroplastic Clp protease core complex.

It is found in the plastid. The protein resides in the chloroplast stroma. The enzyme catalyses Hydrolysis of proteins to small peptides in the presence of ATP and magnesium. alpha-casein is the usual test substrate. In the absence of ATP, only oligopeptides shorter than five residues are hydrolyzed (such as succinyl-Leu-Tyr-|-NHMec, and Leu-Tyr-Leu-|-Tyr-Trp, in which cleavage of the -Tyr-|-Leu- and -Tyr-|-Trp bonds also occurs).. Functionally, cleaves peptides in various proteins in a process that requires ATP hydrolysis. Has a chymotrypsin-like activity. Plays a major role in the degradation of misfolded proteins. The polypeptide is ATP-dependent Clp protease proteolytic subunit (Oenothera elata subsp. hookeri (Hooker's evening primrose)).